A 240-amino-acid chain; its full sequence is UDP-2,3-diacylglucosamine hydrolase (240 aa).

Residues Asp9, His11, Asp43, Asn81, and His116 each coordinate Mn(2+). 81-82 is a substrate binding site; the sequence is NR. Positions 124, 162, 166, 169, and 197 each coordinate substrate. Residues His197 and His199 each coordinate Mn(2+).

This sequence belongs to the LpxH family. The cofactor is Mn(2+).

The protein resides in the cell inner membrane. The enzyme catalyses UDP-2-N,3-O-bis[(3R)-3-hydroxytetradecanoyl]-alpha-D-glucosamine + H2O = 2-N,3-O-bis[(3R)-3-hydroxytetradecanoyl]-alpha-D-glucosaminyl 1-phosphate + UMP + 2 H(+). The protein operates within glycolipid biosynthesis; lipid IV(A) biosynthesis; lipid IV(A) from (3R)-3-hydroxytetradecanoyl-[acyl-carrier-protein] and UDP-N-acetyl-alpha-D-glucosamine: step 4/6. In terms of biological role, hydrolyzes the pyrophosphate bond of UDP-2,3-diacylglucosamine to yield 2,3-diacylglucosamine 1-phosphate (lipid X) and UMP by catalyzing the attack of water at the alpha-P atom. Involved in the biosynthesis of lipid A, a phosphorylated glycolipid that anchors the lipopolysaccharide to the outer membrane of the cell. This Neisseria gonorrhoeae (strain ATCC 700825 / FA 1090) protein is UDP-2,3-diacylglucosamine hydrolase.